The chain runs to 364 residues: Uroporphyrinogen decarboxylase (364 aa).

Residues 28–32 (RQAGR), Asp78, Tyr160, Thr215, and His333 each bind substrate.

This sequence belongs to the uroporphyrinogen decarboxylase family. In terms of assembly, homodimer.

The protein localises to the cytoplasm. It carries out the reaction uroporphyrinogen III + 4 H(+) = coproporphyrinogen III + 4 CO2. It participates in porphyrin-containing compound metabolism; protoporphyrin-IX biosynthesis; coproporphyrinogen-III from 5-aminolevulinate: step 4/4. Catalyzes the decarboxylation of four acetate groups of uroporphyrinogen-III to yield coproporphyrinogen-III. The sequence is that of Uroporphyrinogen decarboxylase from Burkholderia pseudomallei (strain 1106a).